Here is a 599-residue protein sequence, read N- to C-terminus: Dictomallein-2 (599 aa).

An N-terminal signal peptide occupies residues 1-20 (MKLILIYLILVFNLFNFINC). One can recognise a Peptidase M66 domain in the interval 145 to 407 (PDVGQDYTLK…QNYFKNSIYY (263 aa)). H298 is a Zn(2+) binding site. E299 is an active-site residue. The Zn(2+) site is built by H302 and H308.

The protein belongs to the dictomallein family. Zn(2+) is required as a cofactor.

The protein localises to the secreted. The protein is Dictomallein-2 (dtmlB) of Dictyostelium discoideum (Social amoeba).